The primary structure comprises 505 residues: Alpha-1-syntrophin (505 aa).

Disordered regions lie at residues 1–25 (MASG…GAGG) and 40–77 (LTVS…PPQL). 2 PH domains span residues 6 to 269 (RAPR…AQVN) and 293 to 401 (DIKQ…DGCH). The PDZ domain occupies 87 to 170 (RVTVRKADAG…EVVLEVKYMK (84 aa)). S101, S184, S189, S193, and S200 each carry phosphoserine. The tract at residues 180-210 (TGGTSVGWDSPPASPLQRQPSSPGPTPRNFS) is disordered. The region spanning 449-505 (PFEKLQMSSDDGASLLFLDFGGAEGEIQLDLHSCPKTIVFIIHSFLSAKVTRLGLLA) is the SU domain. Residues 483–505 (PKTIVFIIHSFLSAKVTRLGLLA) are calmodulin-binding.

It belongs to the syntrophin family. Monomer and homodimer. Interacts with the other members of the syntrophin family SNTB1 and SNTB2; SGCG and SGCA of the dystrophin glycoprotein complex; NOS1; GRB2; the sodium channel proteins SCN4A and SCN5A; F-actin and calmodulin. Interacts with dystrophin protein DMD and related proteins DTNA and UTRN and with MAPK12, TGFA and GA. Interacts with MYOC; regulates muscle hypertrophy. Interacts with DTNB. Post-translationally, phosphorylated by CaM-kinase II. Phosphorylation may inhibit the interaction with DMD. As to expression, high expression in skeletal muscle and heart. Low expression in brain, pancreas, liver, kidney and lung. Not detected in placenta.

It localises to the cell membrane. Its subcellular location is the sarcolemma. The protein resides in the cell junction. The protein localises to the cytoplasm. It is found in the cytoskeleton. Adapter protein that binds to and probably organizes the subcellular localization of a variety of membrane proteins. May link various receptors to the actin cytoskeleton and the extracellular matrix via the dystrophin glycoprotein complex. Plays an important role in synapse formation and in the organization of UTRN and acetylcholine receptors at the neuromuscular synapse. Binds to phosphatidylinositol 4,5-bisphosphate. This is Alpha-1-syntrophin (SNTA1) from Homo sapiens (Human).